A 468-amino-acid polypeptide reads, in one-letter code: 3-isopropylmalate dehydratase large subunit (468 aa).

The [4Fe-4S] cluster site is built by C347, C407, and C410.

Belongs to the aconitase/IPM isomerase family. LeuC type 1 subfamily. As to quaternary structure, heterodimer of LeuC and LeuD. The cofactor is [4Fe-4S] cluster.

The enzyme catalyses (2R,3S)-3-isopropylmalate = (2S)-2-isopropylmalate. It functions in the pathway amino-acid biosynthesis; L-leucine biosynthesis; L-leucine from 3-methyl-2-oxobutanoate: step 2/4. Functionally, catalyzes the isomerization between 2-isopropylmalate and 3-isopropylmalate, via the formation of 2-isopropylmaleate. This chain is 3-isopropylmalate dehydratase large subunit, found in Campylobacter jejuni subsp. jejuni serotype O:23/36 (strain 81-176).